Here is a 75-residue protein sequence, read N- to C-terminus: Antitoxin MT0312 (75 aa).

Antitoxin component of a type II toxin-antitoxin (TA) system. In Mycobacterium tuberculosis (strain CDC 1551 / Oshkosh), this protein is Antitoxin MT0312.